Reading from the N-terminus, the 995-residue chain is Putative pentatricopeptide repeat-containing protein At5g09950 (995 aa).

22 PPR repeats span residues 35–65, 66–100, 101–137, 138–169, 170–204, 205–241, 242–276, 278–303, 307–342, 348–378, 379–413, 414–448, 449–483, 484–515, 516–550, 551–581, 583–617, 618–652, 653–683, 684–718, 720–750, and 756–786; these read DVYL…MPLR, NCVS…GIFS, NQYA…SYAV, DAVV…IEVK, NSVS…GSRP, TEYT…GLLT, DLFV…NAVT, NGLM…MNSM, SPES…VITT, MVGI…MTDK, DSVS…DILP, GSFT…GIDL, NVSV…DQVS, WNSI…GQKL, NRIT…NIAD, EATT…MAER, DNVT…GQRL, DSFM…CLES, DVVV…MPVR, NSYS…GQTP, DHVT…MSDS, and RIEH…MPMK. A type E motif region spans residues 791 to 868; the sequence is IWRTVLGACC…EAGYSWVTMK (78 aa). Residues 869–899 form a type E(+) motif region; the sequence is DGVHMFVAGDKSHPDADVIYKKLKELNRKMR. A type DYW motif region spans residues 900–995; sequence DAGYVPQTGF…DGACSCSDFW (96 aa).

The protein belongs to the PPR family. PCMP-H subfamily.

This chain is Putative pentatricopeptide repeat-containing protein At5g09950 (PCMP-H35), found in Arabidopsis thaliana (Mouse-ear cress).